Reading from the N-terminus, the 380-residue chain is MKTPIRKTHPVMKIANTALVDLPSPSNISTWWNFGSLLGLFLTMQIITGIILAMHYTSEVDMAFDSISHITRNVNYGWLMRTMHMNGAAFMFICMYAHMGRGMYYSSYMLAETWNIGIIIMIATMATAFMGYVLPWGQMSFWGATVITNLVSAIPYIGTDIVYWLWGGFSVGKATLSRFFAFHFVLPFVLIALSGVHLLFLHQTGSNNPLGLNSNLDKIPFHSFFSWKDLLGFAXMILIFCTITLTFPLIMGDPENFNPANPLSTPPHIQPEWYFLFAYAILRSIPNKLGGVVALVGSLIIPATMMLTHKSMLQPMSFRPISQVIFWLFCANFIALSWIGAAPVEDPYITLGQVFSMLYFLFFLTAPMINMLEKKLSLKQ.

The next 4 helical transmembrane spans lie at 34–54 (FGSLLGLFLTMQIITGIILAM), 78–100 (WLMRTMHMNGAAFMFICMYAHMG), 113–133 (TWNIGIIIMIATMATAFMGYV), and 179–199 (FFAFHFVLPFVLIALSGVHLL). Heme b contacts are provided by His84 and His98. The heme b site is built by His183 and His197. His202 contributes to the a ubiquinone binding site. 4 helical membrane-spanning segments follow: residues 225-245 (FSWKDLLGFAXMILIFCTITL), 289-309 (LGGVVALVGSLIIPATMMLTH), 324-344 (VIFWLFCANFIALSWIGAAPV), and 349-369 (ITLGQVFSMLYFLFFLTAPMI).

The protein belongs to the cytochrome b family. As to quaternary structure, the main subunits of complex b-c1 are: cytochrome b, cytochrome c1 and the Rieske protein. The cofactor is heme b.

Its subcellular location is the mitochondrion inner membrane. Its function is as follows. Component of the ubiquinol-cytochrome c reductase complex (complex III or cytochrome b-c1 complex) that is part of the mitochondrial respiratory chain. The b-c1 complex mediates electron transfer from ubiquinol to cytochrome c. Contributes to the generation of a proton gradient across the mitochondrial membrane that is then used for ATP synthesis. This is Cytochrome b (mt:Cyt-b) from Xenoturbella bocki (Marine worm).